We begin with the raw amino-acid sequence, 123 residues long: Small ribosomal subunit protein uS12 (123 aa).

A disordered region spans residues 1 to 26 (MPTINQLVRKPRKSRSSLNKAPALQH). Asp-90 carries the 3-methylthioaspartic acid modification.

It belongs to the universal ribosomal protein uS12 family. In terms of assembly, part of the 30S ribosomal subunit. Contacts proteins S8 and S17. May interact with IF1 in the 30S initiation complex.

Functionally, with S4 and S5 plays an important role in translational accuracy. Its function is as follows. Interacts with and stabilizes bases of the 16S rRNA that are involved in tRNA selection in the A site and with the mRNA backbone. Located at the interface of the 30S and 50S subunits, it traverses the body of the 30S subunit contacting proteins on the other side and probably holding the rRNA structure together. The combined cluster of proteins S8, S12 and S17 appears to hold together the shoulder and platform of the 30S subunit. In Ehrlichia chaffeensis (strain ATCC CRL-10679 / Arkansas), this protein is Small ribosomal subunit protein uS12.